Consider the following 171-residue polypeptide: S-ribosylhomocysteine lyase (171 aa).

Fe cation-binding residues include H54, H58, and C128.

It belongs to the LuxS family. Homodimer. It depends on Fe cation as a cofactor.

It carries out the reaction S-(5-deoxy-D-ribos-5-yl)-L-homocysteine = (S)-4,5-dihydroxypentane-2,3-dione + L-homocysteine. Functionally, involved in the synthesis of autoinducer 2 (AI-2) which is secreted by bacteria and is used to communicate both the cell density and the metabolic potential of the environment. The regulation of gene expression in response to changes in cell density is called quorum sensing. Catalyzes the transformation of S-ribosylhomocysteine (RHC) to homocysteine (HC) and 4,5-dihydroxy-2,3-pentadione (DPD). This chain is S-ribosylhomocysteine lyase, found in Edwardsiella ictaluri (strain 93-146).